A 98-amino-acid chain; its full sequence is NADH-ubiquinone oxidoreductase chain 4L (98 aa).

Helical transmembrane passes span 1–21 (MASIYLNLMMAFLLALSGVLI), 26–46 (LMSTLLCLEGMMLSLFIMMTL), and 59–79 (APLILLVFSACEAGIGLALLV).

It belongs to the complex I subunit 4L family. As to quaternary structure, core subunit of respiratory chain NADH dehydrogenase (Complex I) which is composed of 45 different subunits.

It is found in the mitochondrion inner membrane. It catalyses the reaction a ubiquinone + NADH + 5 H(+)(in) = a ubiquinol + NAD(+) + 4 H(+)(out). Functionally, core subunit of the mitochondrial membrane respiratory chain NADH dehydrogenase (Complex I) which catalyzes electron transfer from NADH through the respiratory chain, using ubiquinone as an electron acceptor. Part of the enzyme membrane arm which is embedded in the lipid bilayer and involved in proton translocation. The chain is NADH-ubiquinone oxidoreductase chain 4L (MT-ND4L) from Caenolestes fuliginosus (Shrew opossum).